The sequence spans 333 residues: Delta-aminolevulinic acid dehydratase (333 aa).

Residues cysteine 127, cysteine 129, and cysteine 137 each coordinate Zn(2+). Lysine 204 acts as the Schiff-base intermediate with substrate in catalysis. Arginine 214 and arginine 226 together coordinate 5-aminolevulinate. Lysine 257 functions as the Schiff-base intermediate with substrate in the catalytic mechanism. Residues serine 283 and tyrosine 322 each coordinate 5-aminolevulinate.

This sequence belongs to the ALAD family. Homooctamer. Requires Zn(2+) as cofactor.

The catalysed reaction is 2 5-aminolevulinate = porphobilinogen + 2 H2O + H(+). Its pathway is porphyrin-containing compound metabolism; protoporphyrin-IX biosynthesis; coproporphyrinogen-III from 5-aminolevulinate: step 1/4. In terms of biological role, catalyzes an early step in the biosynthesis of tetrapyrroles. Binds two molecules of 5-aminolevulinate per subunit, each at a distinct site, and catalyzes their condensation to form porphobilinogen. The protein is Delta-aminolevulinic acid dehydratase (alad) of Dictyostelium discoideum (Social amoeba).